A 414-amino-acid polypeptide reads, in one-letter code: Cytochrome b (414 aa).

2 helical membrane-spanning segments follow: residues 40–60 and 84–104; these read FFGSLAILTLVIQIVTGVWLA and GWLIRYMHSTGASMFFIVIYL. Positions 91 and 105 each coordinate heme b. A run of 8 helical transmembrane segments spans residues 121 to 141, 154 to 174, 188 to 208, 252 to 272, 294 to 314, 317 to 337, 351 to 371, and 378 to 398; these read LLWMIGVVIYLVMMATAFFGY, QVIVNLFAAVPVVGEDLSVWV, FFAFHFLLPFLLAGLVFLHIV, LMGVVVFLAIFGYVMFFNPTM, IAPVWYFTPFYAMLRAVPPMY, QFPGVVVMFAAILILFVLPWL, IFKWATGIFVVSFVALAWLGI, and YTLLSQIFTVLYFAYFLLMPI. Heme b-binding residues include His192 and His206.

It belongs to the cytochrome b family. As to quaternary structure, the main subunits of complex b-c1 are: cytochrome b, cytochrome c1 and the Rieske protein. It depends on heme b as a cofactor.

The protein localises to the cell membrane. Component of the ubiquinol-cytochrome c reductase complex (complex III or cytochrome b-c1 complex), which is a respiratory chain that generates an electrochemical potential coupled to ATP synthesis. The chain is Cytochrome b (petB) from Allochromatium vinosum (strain ATCC 17899 / DSM 180 / NBRC 103801 / NCIMB 10441 / D) (Chromatium vinosum).